Reading from the N-terminus, the 94-residue chain is Acylphosphatase (94 aa).

The region spanning 8 to 94 (RLTAWVHGRV…REQITGFHER (87 aa)) is the Acylphosphatase-like domain. Catalysis depends on residues R23 and N41.

This sequence belongs to the acylphosphatase family.

The catalysed reaction is an acyl phosphate + H2O = a carboxylate + phosphate + H(+). The polypeptide is Acylphosphatase (acyP) (Mycobacterium sp. (strain KMS)).